Consider the following 207-residue polypeptide: BON1-associated protein 2 (207 aa).

The region spanning 1–112 is the C2 domain; it reads MSYSTFKRSL…GFAPQGHLNF (112 aa).

In terms of assembly, interacts with BON1, BON2 and BON3. In terms of tissue distribution, expressed in roots, leaves, stems and flowers.

It localises to the membrane. Negative regulator of cell death and defense responses. Exhibits calcium-dependent phospholipid binding properties. This is BON1-associated protein 2 (BAP2) from Arabidopsis thaliana (Mouse-ear cress).